We begin with the raw amino-acid sequence, 336 residues long: Ketol-acid reductoisomerase (NADP(+)) (336 aa).

Residues 5-185 (SKIYTDKDSN…GATRAGVIPT (181 aa)) form the KARI N-terminal Rossmann domain. NADP(+)-binding positions include 28–31 (YGSQ), Ser56, and 86–89 (DMVQ). Residue His111 is part of the active site. Gly137 lines the NADP(+) pocket. The KARI C-terminal knotted domain maps to 186–331 (TFKEETETDL…NQLKDLIQKG (146 aa)). Mg(2+) contacts are provided by Asp194, Glu198, Glu230, and Glu234. Ser255 provides a ligand contact to substrate.

This sequence belongs to the ketol-acid reductoisomerase family. Requires Mg(2+) as cofactor.

The catalysed reaction is (2R)-2,3-dihydroxy-3-methylbutanoate + NADP(+) = (2S)-2-acetolactate + NADPH + H(+). The enzyme catalyses (2R,3R)-2,3-dihydroxy-3-methylpentanoate + NADP(+) = (S)-2-ethyl-2-hydroxy-3-oxobutanoate + NADPH + H(+). It participates in amino-acid biosynthesis; L-isoleucine biosynthesis; L-isoleucine from 2-oxobutanoate: step 2/4. Its pathway is amino-acid biosynthesis; L-valine biosynthesis; L-valine from pyruvate: step 2/4. In terms of biological role, involved in the biosynthesis of branched-chain amino acids (BCAA). Catalyzes an alkyl-migration followed by a ketol-acid reduction of (S)-2-acetolactate (S2AL) to yield (R)-2,3-dihydroxy-isovalerate. In the isomerase reaction, S2AL is rearranged via a Mg-dependent methyl migration to produce 3-hydroxy-3-methyl-2-ketobutyrate (HMKB). In the reductase reaction, this 2-ketoacid undergoes a metal-dependent reduction by NADPH to yield (R)-2,3-dihydroxy-isovalerate. The protein is Ketol-acid reductoisomerase (NADP(+)) of Saccharolobus islandicus (strain Y.N.15.51 / Yellowstone #2) (Sulfolobus islandicus).